We begin with the raw amino-acid sequence, 236 residues long: Rab-like protein 3 (236 aa).

A small GTPase-like region spans residues 1-235; it reads MASLDRVKVL…GGGALKNFHC (235 aa). GTP is bound by residues 16-21, 148-150, and 179-180; these read GVGKSS, KLD, and DC.

The protein belongs to the small GTPase superfamily. Rab family. In terms of assembly, homodimer. Interacts with GPR89; the interaction stabilizes GPR89. Interacts with RAP1GDS1.

Its function is as follows. Required for KRAS signaling regulation and modulation of cell proliferation. Regulator of KRAS prenylation, and probably prenylation of other small GTPases. Required for lymphocyte development and function. Not required for myeloid cell development. In Mus musculus (Mouse), this protein is Rab-like protein 3 (Rabl3).